Reading from the N-terminus, the 699-residue chain is Elongation factor G (699 aa).

A tr-type G domain is found at Glu8–Met288. GTP is bound by residues Ala17–Thr24, Asp86–His90, and Asn140–Asp143.

Belongs to the TRAFAC class translation factor GTPase superfamily. Classic translation factor GTPase family. EF-G/EF-2 subfamily.

It localises to the cytoplasm. Functionally, catalyzes the GTP-dependent ribosomal translocation step during translation elongation. During this step, the ribosome changes from the pre-translocational (PRE) to the post-translocational (POST) state as the newly formed A-site-bound peptidyl-tRNA and P-site-bound deacylated tRNA move to the P and E sites, respectively. Catalyzes the coordinated movement of the two tRNA molecules, the mRNA and conformational changes in the ribosome. The chain is Elongation factor G from Rhizobium johnstonii (strain DSM 114642 / LMG 32736 / 3841) (Rhizobium leguminosarum bv. viciae).